The following is a 372-amino-acid chain: Cytochrome b (372 aa).

4 helical membrane-spanning segments follow: residues 25-45 (FGSM…FLAI), 69-90 (WIMQ…YIHI), 105-125 (WLSG…GYVL), and 170-190 (FFAL…IHII). Heme b is bound by residues histidine 75 and histidine 89. Heme b-binding residues include histidine 174 and histidine 188. Histidine 193 contacts a ubiquinone. The next 4 helical transmembrane spans lie at 218-238 (YKDM…LSFS), 280-300 (LGGT…PFTH), 312-332 (LSQA…WTAS), and 339-358 (FVTI…ITIP).

Belongs to the cytochrome b family. The cytochrome bc1 complex contains 3 respiratory subunits (MT-CYB, CYC1 and UQCRFS1), 2 core proteins (UQCRC1 and UQCRC2) and probably 6 low-molecular weight proteins. The cofactor is heme b.

The protein localises to the mitochondrion inner membrane. Functionally, component of the ubiquinol-cytochrome c reductase complex (complex III or cytochrome b-c1 complex) that is part of the mitochondrial respiratory chain. The b-c1 complex mediates electron transfer from ubiquinol to cytochrome c. Contributes to the generation of a proton gradient across the mitochondrial membrane that is then used for ATP synthesis. The polypeptide is Cytochrome b (MT-CYB) (Naja multifasciata (Burrowing cobra)).